The chain runs to 145 residues: 3-dehydroquinate dehydratase (145 aa).

Residue tyrosine 23 is the Proton acceptor of the active site. Substrate contacts are provided by asparagine 74, histidine 80, and aspartate 87. The active-site Proton donor is the histidine 100. Residues 101–102 (LS) and arginine 111 each bind substrate.

This sequence belongs to the type-II 3-dehydroquinase family. In terms of assembly, homododecamer.

It carries out the reaction 3-dehydroquinate = 3-dehydroshikimate + H2O. It functions in the pathway metabolic intermediate biosynthesis; chorismate biosynthesis; chorismate from D-erythrose 4-phosphate and phosphoenolpyruvate: step 3/7. In terms of biological role, catalyzes a trans-dehydration via an enolate intermediate. In Halalkalibacterium halodurans (strain ATCC BAA-125 / DSM 18197 / FERM 7344 / JCM 9153 / C-125) (Bacillus halodurans), this protein is 3-dehydroquinate dehydratase.